Consider the following 203-residue polypeptide: Cryptic neisserial protein 1 (203 aa).

The first 18 residues, 1–18 (MRRAILLILTLTVGTSLA), serve as a signal peptide directing secretion.

Belongs to the Cnp family.

Its subcellular location is the periplasm. It localises to the cytoplasm. The polypeptide is Cryptic neisserial protein 1 (Neisseria gonorrhoeae (strain ATCC 700825 / FA 1090)).